The primary structure comprises 638 residues: 1-deoxy-D-xylulose-5-phosphate synthase (638 aa).

Thiamine diphosphate is bound by residues H71 and 112–114; that span reads SHA. D144 provides a ligand contact to Mg(2+). Thiamine diphosphate-binding positions include 145–146, N173, Y284, and E365; that span reads GA. Mg(2+) is bound at residue N173.

Belongs to the transketolase family. DXPS subfamily. Homodimer. Mg(2+) serves as cofactor. It depends on thiamine diphosphate as a cofactor.

It carries out the reaction D-glyceraldehyde 3-phosphate + pyruvate + H(+) = 1-deoxy-D-xylulose 5-phosphate + CO2. Its pathway is metabolic intermediate biosynthesis; 1-deoxy-D-xylulose 5-phosphate biosynthesis; 1-deoxy-D-xylulose 5-phosphate from D-glyceraldehyde 3-phosphate and pyruvate: step 1/1. In terms of biological role, catalyzes the acyloin condensation reaction between C atoms 2 and 3 of pyruvate and glyceraldehyde 3-phosphate to yield 1-deoxy-D-xylulose-5-phosphate (DXP). In Mycobacterium sp. (strain KMS), this protein is 1-deoxy-D-xylulose-5-phosphate synthase.